The following is a 2069-amino-acid chain: Dedicator of cytokinesis protein 9 (2069 aa).

Phosphoserine occurs at positions 21, 32, 167, and 170. The region spanning 174 to 281 (GITKHGWLYK…WITILNKILQ (108 aa)) is the PH domain. Residues 290-313 (EKRNGDSHEDDEQSKLEGSGSGLD) are disordered. A phosphoserine mark is found at Ser-433 and Ser-443. One can recognise a C2 DOCK-type domain in the interval 640 to 818 (TNHLYVYPKY…PLLKISTHLV (179 aa)). 2 positions are modified to phosphoserine: Ser-927 and Ser-1235. At Thr-1241 the chain carries Phosphothreonine. The disordered stretch occupies residues 1241–1282 (TPNINSVRNADSRGSLISTDSGNSLPERNSEKSNSLDKHQQS). A phosphoserine mark is found at Ser-1255, Ser-1261, and Ser-1264. Over residues 1255 to 1267 (SLISTDSGNSLPE) the composition is skewed to polar residues. The segment covering 1268-1280 (RNSEKSNSLDKHQ) has biased composition (basic and acidic residues). Residues 1605-2069 (KSYASTPELR…LSEIMHEQLG (465 aa)) form the DOCKER domain. The tract at residues 1693–2069 (DEEASMMEDV…LSEIMHEQLG (377 aa)) is interaction with CDC42. 2 coiled-coil regions span residues 1948 to 1982 (IEVA…KLQG) and 2034 to 2067 (NERL…MHEQ).

The protein belongs to the DOCK family. In terms of assembly, homodimer. Interacts preferentially with nucleotide-depleted CDC42. As to expression, widely expressed, with highest expression in heart and placenta. Expressed at intermediate level in kidney, brain, lung and skeletal muscle.

It is found in the endomembrane system. Its function is as follows. Guanine nucleotide-exchange factor (GEF) that activates CDC42 by exchanging bound GDP for free GTP. Overexpression induces filopodia formation. The sequence is that of Dedicator of cytokinesis protein 9 from Homo sapiens (Human).